The primary structure comprises 237 residues: MDRPRFKRILLKLSGEVLMGQGQFGIDPETVARVAREIADVATHYELCLVVGGGNIFRGLAAAAKGFDRTSADYMGMLATVMNALAVQNALEQIGVDTRVQSAIPMSTVCEPFIRRRAERHLEKGRIVIFAAGTGNPYFTTDSAAALRAAEMGCDALFKGTSVDGVYNADPKKDPTAIRYETVTFNRVLADDLKVMDASAVALCRDNNIPIVVFNIREQGNLARVLAGSGTATTVQN.

12–15 (KLSG) contacts ATP. Glycine 53 contributes to the UMP binding site. ATP is bound by residues glycine 54 and arginine 58. UMP contacts are provided by residues aspartate 73 and 134–141 (TGNPYFTT). Positions 161, 167, and 170 each coordinate ATP.

The protein belongs to the UMP kinase family. As to quaternary structure, homohexamer.

It is found in the cytoplasm. It carries out the reaction UMP + ATP = UDP + ADP. It functions in the pathway pyrimidine metabolism; CTP biosynthesis via de novo pathway; UDP from UMP (UMPK route): step 1/1. Inhibited by UTP. Catalyzes the reversible phosphorylation of UMP to UDP. The chain is Uridylate kinase from Rhizorhabdus wittichii (strain DSM 6014 / CCUG 31198 / JCM 15750 / NBRC 105917 / EY 4224 / RW1) (Sphingomonas wittichii).